We begin with the raw amino-acid sequence, 136 residues long: Protein NrdI (136 aa).

Belongs to the NrdI family.

Functionally, probably involved in ribonucleotide reductase function. In Salmonella dublin (strain CT_02021853), this protein is Protein NrdI.